A 604-amino-acid chain; its full sequence is MLKDIRKPFQYPKLPIDKKEGAKKRAKAKDTKGTLRRIWSYLAERKGLLILVMLMVVISAIFGLLGPFVIGKAIDHFIVGKTVSGLIPVLLLLLAIYIIQSLSLWFQNYWMITISQGTVFRMRSELFTHLHELPIPFFDKQRHGELMSRVTNDIENVSSTLNTSVIQILSSVITFVGTIAVMLYMSPLLTLITLTIIPVMAASLKWITNRTGKLFKEQQKNLGDLNGYIEESVSGAKVIKAYSREKQITAEFLEKNAALKTSGFWAQTISGFIPKVMNSLNNLSFTMIAAIGGLFALKGWISIGSIVVFAEYSRQFTRPLNDLANQFNTMLSAIAGAERVFDVLDEKEEREDEKNAVHQPIQTGSIEFRDVSFGYDKGQQTLKHLQFTVPAGQSIAFVGPTGAGKTTVTNLLARFYEPNDGKILIDGTDIKTLTRASLRKNMGFVLQDSFLFQGTIRENIRYGRLDASDQEVEAAAKTANAHSFIERLPKGYDTVLTQNGSGISQGQKQLISIARAVLADPVLLILDEATSNIDTVTEVNIQEALARLMEGRTSVIIAHRLNTIQRADQIVVLKNGEMIEKGSHDELIRQKGFYSDLYESQFEK.

The region spanning 49–332 (LILVMLMVVI…LANQFNTMLS (284 aa)) is the ABC transmembrane type-1 domain. 4 consecutive transmembrane segments (helical) span residues 50-70 (ILVM…PFVI), 86-106 (LIPV…SLWF), 172-192 (VITF…LTLI), and 288-308 (IAAI…SIVV). The 235-residue stretch at 366 to 600 (IEFRDVSFGY…KGFYSDLYES (235 aa)) folds into the ABC transporter domain. 399–406 (GPTGAGKT) lines the ATP pocket. A helical membrane pass occupies residues 510–530 (LISIARAVLADPVLLILDEAT).

The protein belongs to the ABC transporter superfamily.

Its subcellular location is the cell membrane. This is an uncharacterized protein from Bacillus subtilis (strain 168).